We begin with the raw amino-acid sequence, 575 residues long: FAD-linked oxidoreductase asqF (575 aa).

The signal sequence occupies residues 1–23; the sequence is MALFRLSAAIVVIFLYIWSPSQR. Residues Asn45 and Asn80 are each glycosylated (N-linked (GlcNAc...) asparagine). The FAD-binding PCMH-type domain occupies 118–306; it reads NQGRIPLYAA…VRVTMRTYPD (189 aa). His156 is subject to Pros-8alpha-FAD histidine. N-linked (GlcNAc...) asparagine glycosylation is present at Asn370.

Belongs to the oxygen-dependent FAD-linked oxidoreductase family. FAD serves as cofactor.

It carries out the reaction peniprequinolone + A = yaequinolone E + AH2. It functions in the pathway secondary metabolite biosynthesis. The protein operates within alkaloid biosynthesis. Its pathway is mycotoxin biosynthesis. FAD-linked oxidoreductase; part of the gene cluster that mediates the biosynthesis of the aspoquinolone mycotoxins. Within the pathway, asqF performs FAD-dependent dehydrogenation of the dimethylallyl quinolone peniprequinolone to yield the conjugated aryl diene yaequinolone E. The first step of the pathway is catalyzed by the nonribosomal peptide synthetase asqK that condenses anthranilic acid and O-methyl-L-tyrosine to produce 4'-methoxycyclopeptin. 4'-methoxycyclopeptin is then converted to 4'-methoxydehydrocyclopeptin by the ketoglutarate-dependent dioxygenase asqJ. AsqJ also converts its first product 4'-methoxydehydrocyclopeptin to 4'-methoxycyclopenin. The following conversion of 4'-methoxycyclopenin into 4'-methoxyviridicatin is catalyzed by the cyclopenase asqI. 4'-methoxyviridicatin is the precursor of quinolone natural products, and is further converted to quinolinone B. The prenyltransferase asqH1 then catalyzes the canonical Friedel-Crafts alkylation of quinolinone B with dimethylallyl cation to yield dimethylallyl quinolone, which is subjected to FAD-dependent dehydrogenation by the FAD-linked oxidoreductase asqF to yield conjugated aryl diene. The delta(3') double bond then serves as the site of the second alkylation with DMAPP catalyzed by the prenyltransferase asqH2 to yield a carbenium ion intermediate, which can be attacked by H(2)O to yield a styrenyl quinolone containing a C3'-hydroxyprenyl chain. The FAD-dependent monooxygenase asqG performs epoxidation of the terminal C7'-C8' olefin. Finally, after dehydratation of the epoxide at C3 by asqC, the quinolone epoxide rearrangement protein asqO catalyzes an enzymatic 3-exo-tet cyclization to yield the cyclopropyl-THF ring system in aspoquinolone. This chain is FAD-linked oxidoreductase asqF, found in Emericella nidulans (strain FGSC A4 / ATCC 38163 / CBS 112.46 / NRRL 194 / M139) (Aspergillus nidulans).